Here is a 109-residue protein sequence, read N- to C-terminus: T cell receptor alpha variable 26-2 (109 aa).

Positions 1–19 are cleaved as a signal peptide; the sequence is MKLVTSITVLLSLGIMGDA. In terms of domain architecture, Ig-like spans 20–109; that stretch reads KTTQPNSMES…AAVYYCILRD (90 aa). Cysteine 39 and cysteine 105 form a disulfide bridge. Asparagine 40 is a glycosylation site (N-linked (GlcNAc...) asparagine).

In terms of assembly, alpha-beta TR is a heterodimer composed of an alpha and beta chain; disulfide-linked. The alpha-beta TR is associated with the transmembrane signaling CD3 coreceptor proteins to form the TR-CD3 (TcR or TCR). The assembly of alpha-beta TR heterodimers with CD3 occurs in the endoplasmic reticulum where a single alpha-beta TR heterodimer associates with one CD3D-CD3E heterodimer, one CD3G-CD3E heterodimer and one CD247 homodimer forming a stable octameric structure. CD3D-CD3E and CD3G-CD3E heterodimers preferentially associate with TR alpha and TR beta chains, respectively. The association of the CD247 homodimer is the last step of TcR assembly in the endoplasmic reticulum and is required for transport to the cell surface.

Its subcellular location is the cell membrane. Its function is as follows. V region of the variable domain of T cell receptor (TR) alpha chain that participates in the antigen recognition. Alpha-beta T cell receptors are antigen specific receptors which are essential to the immune response and are present on the cell surface of T lymphocytes. Recognize peptide-major histocompatibility (MH) (pMH) complexes that are displayed by antigen presenting cells (APC), a prerequisite for efficient T cell adaptive immunity against pathogens. Binding of alpha-beta TR to pMH complex initiates TR-CD3 clustering on the cell surface and intracellular activation of LCK that phosphorylates the ITAM motifs of CD3G, CD3D, CD3E and CD247 enabling the recruitment of ZAP70. In turn ZAP70 phosphorylates LAT, which recruits numerous signaling molecules to form the LAT signalosome. The LAT signalosome propagates signal branching to three major signaling pathways, the calcium, the mitogen-activated protein kinase (MAPK) kinase and the nuclear factor NF-kappa-B (NF-kB) pathways, leading to the mobilization of transcription factors that are critical for gene expression and essential for T cell growth and differentiation. The T cell repertoire is generated in the thymus, by V-(D)-J rearrangement. This repertoire is then shaped by intrathymic selection events to generate a peripheral T cell pool of self-MH restricted, non-autoaggressive T cells. Post-thymic interaction of alpha-beta TR with the pMH complexes shapes TR structural and functional avidity. This Homo sapiens (Human) protein is T cell receptor alpha variable 26-2.